Here is a 528-residue protein sequence, read N- to C-terminus: UDP-glucuronosyltransferase 2B10 (528 aa).

A signal peptide spans 1–23 (MALKWTTVLLIQLSFYFSSGSCG). Asparagine 66 is a glycosylation site (N-linked (GlcNAc...) asparagine). An N6-succinyllysine modification is found at lysine 134. 2 N-linked (GlcNAc...) asparagine glycosylation sites follow: asparagine 314 and asparagine 481. The chain crosses the membrane as a helical span at residues 492 to 512 (VIGFLLACVATVLFIITKCCL).

The protein belongs to the UDP-glycosyltransferase family.

The protein resides in the microsome membrane. It localises to the endoplasmic reticulum membrane. The catalysed reaction is glucuronate acceptor + UDP-alpha-D-glucuronate = acceptor beta-D-glucuronoside + UDP + H(+). Functionally, UDPGT is of major importance in the conjugation and subsequent elimination of potentially toxic xenobiotics and endogenous compounds. This is UDP-glucuronosyltransferase 2B10 (UGT2B10) from Homo sapiens (Human).